Reading from the N-terminus, the 426-residue chain is Putative acid phosphatase 1 (426 aa).

Positions 1–18 (MRVLFYVFPFVIFALSQA) are cleaved as a signal peptide. Over 19 to 388 (QLISVHVIFR…HNWTMTTVSW (370 aa)) the chain is Extracellular. H29 (nucleophile) is an active-site residue. N37 and N145 each carry an N-linked (GlcNAc...) asparagine glycan. C133 and C369 are joined by a disulfide. Catalysis depends on D276, which acts as the Proton donor. N380 carries an N-linked (GlcNAc...) asparagine glycan. Residues 389 to 409 (ILIGISAFLLIILIIMSYLAV) form a helical membrane-spanning segment. Topologically, residues 410–426 (RYKNRSVVTIKKVCLEN) are cytoplasmic.

The protein belongs to the histidine acid phosphatase family.

It localises to the membrane. It catalyses the reaction a phosphate monoester + H2O = an alcohol + phosphate. This Caenorhabditis briggsae protein is Putative acid phosphatase 1.